The sequence spans 221 residues: Small ribosomal subunit protein uS2 (221 aa).

The interval 202–221 (KVKMPQQNQRGRPQRRFQRR) is disordered.

The protein belongs to the universal ribosomal protein uS2 family.

The protein is Small ribosomal subunit protein uS2 of Methanococcus vannielii (strain ATCC 35089 / DSM 1224 / JCM 13029 / OCM 148 / SB).